A 296-amino-acid polypeptide reads, in one-letter code: Aspartate and glycine-rich protein (296 aa).

A compositionally biased stretch (gly residues) spans 1–77 (GDGENGNGNG…GNGNGNGNGN (77 aa)). Disordered regions lie at residues 1–219 (GDGE…DNGG) and 233–296 (RARA…YTSY). 2 stretches are compositionally biased toward acidic residues: residues 80–96 (FDDD…DDWN) and 103–194 (NGDD…DDRW). A compositionally biased stretch (gly residues) spans 198 to 210 (NGNGNGNGNGNGN). A compositionally biased stretch (low complexity) spans 233–243 (RARAAASAAGR). The segment covering 244-259 (SRGGSGGSGGSGGSGG) has biased composition (gly residues). Residues 270–281 (RAFASARASSGN) show a composition bias toward low complexity.

Component of the acid-soluble and acid-insoluble organic matrix of calcified shell layers (at protein level).

The protein localises to the secreted. This Haliotis asinina (Donkey's ear abalone) protein is Aspartate and glycine-rich protein.